Consider the following 330-residue polypeptide: MKKSFIHQQEEISFVKNTFTQYLIAKLDVVEVQGPILSRVGDGMQDNLSGTENPVSVNVLKIPNATFEVVHSLAKWKRHTLARFGFNEGEGLVVNMKALRPDEDSLDQTHSVYVDQWDWEKVIPDGKRNLAYLKETVETIYKVIRLTELAVEARYDIEAVLPKKITFIHTEELVAKYPDLTPKERENAITKEFGAVFLIGIGGVLPDGKPHDGRAPDYDDWTTETENGYHGLNGDILVWNDQLGSAFELSSMGIRVDEEALKRQVEMTGDQDRLGFDWHKSLLNGLFPLTIGGGIGQSRMVMFLLRKQHIGEVQTSVWPQEVRDSYDNIL.

It belongs to the class-II aminoacyl-tRNA synthetase family. AsnA subfamily.

Its subcellular location is the cytoplasm. It catalyses the reaction L-aspartate + NH4(+) + ATP = L-asparagine + AMP + diphosphate + H(+). The protein operates within amino-acid biosynthesis; L-asparagine biosynthesis; L-asparagine from L-aspartate (ammonia route): step 1/1. The polypeptide is Aspartate--ammonia ligase (Streptococcus pyogenes serotype M1).